The primary structure comprises 376 residues: Heme chaperone HemW (376 aa).

Residues methionine 1–glutamate 236 enclose the Radical SAM core domain. Residue tyrosine 10 coordinates S-adenosyl-L-methionine. The [4Fe-4S] cluster site is built by cysteine 16, cysteine 20, and cysteine 23. S-adenosyl-L-methionine contacts are provided by residues glycine 66, glycine 67–threonine 68, glutamate 99, glutamine 126, arginine 138, and aspartate 162.

It belongs to the anaerobic coproporphyrinogen-III oxidase family. HemW subfamily. The cofactor is [4Fe-4S] cluster.

It is found in the cytoplasm. Probably acts as a heme chaperone, transferring heme to an unknown acceptor. Binds one molecule of heme per monomer, possibly covalently. Binds 1 [4Fe-4S] cluster. The cluster is coordinated with 3 cysteines and an exchangeable S-adenosyl-L-methionine. The polypeptide is Heme chaperone HemW (Buchnera aphidicola subsp. Schizaphis graminum (strain Sg)).